The chain runs to 218 residues: Ornithine decarboxylase antizyme 2 (218 aa).

It belongs to the ODC antizyme family. In terms of assembly, interacts with ODC1 and thereby sterically blocks ODC homodimerization. In terms of tissue distribution, expressed ubiquitously in 24 hours embryos, with highest levels in telencephalon, lens, retina, cerebellum and hindbrain primordia.

Functionally, ornithine decarboxylase (ODC) antizyme protein that negatively regulates ODC activity and intracellular polyamine biosynthesis and uptake in response to increased intracellular polyamine levels. Binds to ODC monomers, inhibiting the assembly of the functional ODC homodimers. Does not target the ODC monomers for degradation, which allows a protein synthesis-independent restoration of ODC activity. The polypeptide is Ornithine decarboxylase antizyme 2 (oaz1b) (Danio rerio (Zebrafish)).